We begin with the raw amino-acid sequence, 490 residues long: Cysteine--tRNA ligase (490 aa).

Cys43 provides a ligand contact to Zn(2+). Positions 45 to 55 match the 'HIGH' region motif; sequence MTVQSSPHLGH. The tract at residues 177 to 204 is disordered; sequence VDEMSPAEDSDPRGKRDPRDFALWKGHK. Residues 186 to 204 are compositionally biased toward basic and acidic residues; it reads SDPRGKRDPRDFALWKGHK. Cys228, His253, and Glu257 together coordinate Zn(2+). The short motif at 284–288 is the 'KMSKS' region element; it reads KMSKS. Lys287 contacts ATP.

It belongs to the class-I aminoacyl-tRNA synthetase family. In terms of assembly, monomer. Zn(2+) is required as a cofactor.

Its subcellular location is the cytoplasm. The catalysed reaction is tRNA(Cys) + L-cysteine + ATP = L-cysteinyl-tRNA(Cys) + AMP + diphosphate. The polypeptide is Cysteine--tRNA ligase (Cutibacterium acnes (strain DSM 16379 / KPA171202) (Propionibacterium acnes)).